Here is a 610-residue protein sequence, read N- to C-terminus: Major facilitator superfamily multidrug transporter FLU1 (610 aa).

Residues Asn3 and Asn21 are each glycosylated (N-linked (GlcNAc...) asparagine). Positions 47-58 (GPTDSVESSSNT) are enriched in polar residues. The tract at residues 47–74 (GPTDSVESSSNTADEENEINSFNAQNVK) is disordered. 11 helical membrane passes run 165 to 185 (ILYC…SAMF), 209 to 229 (LFVF…ELFG), 231 to 251 (KLVM…VATA), 262 to 282 (FFAG…MADM), 292 to 312 (IAIF…LGAF), 323 to 343 (WTSY…TFLL), 408 to 428 (AFIY…FLGE), 437 to 457 (ELPY…IMLF), 478 to 498 (LEPM…LGWT), 507 to 527 (WIVP…IFLP), and 530 to 550 (NYII…NTFI). The N-linked (GlcNAc...) asparagine glycan is linked to Asn568. Residues 573-593 (WASTLLGCIGILLLPMPFVFY) form a helical membrane-spanning segment.

This sequence belongs to the major facilitator superfamily. DHA1 family. Polyamines/proton antiporter (TC 2.A.1.2.16) subfamily.

Its subcellular location is the cell membrane. Major facilitator superfamily transporter that mediates resistance to structurally and functionally unrelated compounds including cycloheximide but also azoles such as fuconazole, ketoconazole and itraconazole. Also mediates efflux of histatin 5, a salivary human antimicrobial peptide, and is responsible for reduction of its toxicity in C.albicans. This Candida albicans (strain SC5314 / ATCC MYA-2876) (Yeast) protein is Major facilitator superfamily multidrug transporter FLU1.